The following is a 337-amino-acid chain: tRNA N6-adenosine threonylcarbamoyltransferase (337 aa).

The Fe cation site is built by histidine 111 and histidine 115. Residues 134-138, aspartate 167, glycine 180, and asparagine 272 contribute to the substrate site; that span reads LVSGG. Aspartate 300 is a binding site for Fe cation.

This sequence belongs to the KAE1 / TsaD family. It depends on Fe(2+) as a cofactor.

It localises to the cytoplasm. It catalyses the reaction L-threonylcarbamoyladenylate + adenosine(37) in tRNA = N(6)-L-threonylcarbamoyladenosine(37) in tRNA + AMP + H(+). Its function is as follows. Required for the formation of a threonylcarbamoyl group on adenosine at position 37 (t(6)A37) in tRNAs that read codons beginning with adenine. Is involved in the transfer of the threonylcarbamoyl moiety of threonylcarbamoyl-AMP (TC-AMP) to the N6 group of A37, together with TsaE and TsaB. TsaD likely plays a direct catalytic role in this reaction. This is tRNA N6-adenosine threonylcarbamoyltransferase from Aeromonas hydrophila subsp. hydrophila (strain ATCC 7966 / DSM 30187 / BCRC 13018 / CCUG 14551 / JCM 1027 / KCTC 2358 / NCIMB 9240 / NCTC 8049).